Consider the following 101-residue polypeptide: Large ribosomal subunit protein uL24 (101 aa).

Belongs to the universal ribosomal protein uL24 family. Part of the 50S ribosomal subunit.

Its function is as follows. One of two assembly initiator proteins, it binds directly to the 5'-end of the 23S rRNA, where it nucleates assembly of the 50S subunit. Functionally, one of the proteins that surrounds the polypeptide exit tunnel on the outside of the subunit. This is Large ribosomal subunit protein uL24 from Cereibacter sphaeroides (strain ATCC 17029 / ATH 2.4.9) (Rhodobacter sphaeroides).